The following is a 549-amino-acid chain: ATP synthase subunit alpha (549 aa).

Gly-172–Thr-179 is an ATP binding site. A disordered region spans residues Ser-513–Lys-549. The span at Val-540 to Lys-549 shows a compositional bias: basic residues.

Belongs to the ATPase alpha/beta chains family. As to quaternary structure, F-type ATPases have 2 components, CF(1) - the catalytic core - and CF(0) - the membrane proton channel. CF(1) has five subunits: alpha(3), beta(3), gamma(1), delta(1), epsilon(1). CF(0) has three main subunits: a(1), b(2) and c(9-12). The alpha and beta chains form an alternating ring which encloses part of the gamma chain. CF(1) is attached to CF(0) by a central stalk formed by the gamma and epsilon chains, while a peripheral stalk is formed by the delta and b chains.

The protein resides in the cell membrane. The catalysed reaction is ATP + H2O + 4 H(+)(in) = ADP + phosphate + 5 H(+)(out). Functionally, produces ATP from ADP in the presence of a proton gradient across the membrane. The alpha chain is a regulatory subunit. This is ATP synthase subunit alpha from Mycobacterium ulcerans (strain Agy99).